Here is a 244-residue protein sequence, read N- to C-terminus: Protein DCG1 (244 aa).

It belongs to the HyuE racemase family.

This Saccharomyces cerevisiae (strain ATCC 204508 / S288c) (Baker's yeast) protein is Protein DCG1 (DCG1).